Here is a 2633-residue protein sequence, read N- to C-terminus: Non-reducing polyketide synthase sor2 (2633 aa).

An N-terminal acylcarrier protein transacylase domain (SAT) region spans residues 67–237 (VSNAQKLAEW…TTSTRTVAAL (171 aa)). Cys-140 functions as the Nucleophile; for transacylase activity in the catalytic mechanism. His-258 serves as the catalytic Proton donor/acceptor; for transacylase activity. The 426-residue stretch at 389-814 (ENDIAVIGMA…GSNASVIIKQ (426 aa)) folds into the Ketosynthase family 3 (KS3) domain. Catalysis depends on for beta-ketoacyl synthase activity residues Cys-561, His-696, and His-737. The interval 928 to 1239 (CFGGQVSTFV…SKASSQLSDV (312 aa)) is malonyl-CoA:ACP transacylase (MAT) domain. An N-terminal hotdog fold region spans residues 1307–1437 (PQPVGLYTLL…GQLHFQASDD (131 aa)). Residues 1307–1627 (PQPVGLYTLL…YAPVSLDQLF (321 aa)) enclose the PKS/mFAS DH domain. The product template (PT) domain stretch occupies residues 1338-1509 (MSDHAIGKAQ…SNESAGRLVR (172 aa)). A C-terminal hotdog fold region spans residues 1464 to 1627 (GRSDEVIQGQ…YAPVSLDQLF (164 aa)). The 75-residue stretch at 1684–1758 (EELWLRLRPV…GILKFLQSTL (75 aa)) folds into the Carrier domain. Ser-1718 bears the O-(pantetheine 4'-phosphoryl)serine mark. The segment at 1762 to 1792 (DVHDSSETMSTVSSDGNVHSPPTSGSEMASP) is disordered. Residues 1768-1790 (ETMSTVSSDGNVHSPPTSGSEMA) are compositionally biased toward polar residues. Residues 1982–2166 (FELMADFLTR…ASGFKHVRWT (185 aa)) are methyltransferase domain. The tract at residues 2253–2495 (VTGATGSLGS…TLRALPDVDG (243 aa)) is NADPH-binding (R) domain.

The cofactor is pantetheine 4'-phosphate.

It participates in secondary metabolite biosynthesis. Non-reducing polyketide synthase; part of the SOR gene cluster that mediates the biosynthesis of sorbicillinoids, a diverse group of yellow secondary metabolites that restrict growth of competing pathogenic fungi but not of bacteria. Sorbicillinoids biosynthesis requires the action of two PKSs. The SOR cluster is required for the production of trichodimerol and dihydrotrichotetronin, with sor2 being sufficient for production of trichodimerol, but not dihydrotrichotetronin in the light. Sor1 iteratively combines three acetyl units and the growing chain is modified by the ketoacyl reductase subunit, and optional by the enoyl reductase subunit in the second cycle. The polyketide is then handed over to the PKS sor2, which adds three more acetyl units, and two methyl groups. Sor2 releases an aldehyde, which undergoes spontaneous cyclization resulting in the formation of sorbicillin or 2',3'-dihydrosorbicillin. The monooxygenase sor5 oxidizes sorbicillin and 2',3'-dihydrosorbicillin to 2',3'-dihydrosorbicillinol and sorbicillinol, respectively. The oxidoreductase sor8 further converts sorbicillinol into oxosorbicillinol. Sorbicillinol is the building block for the other sorbicillinoids such as disorbicillinol, bisvertinolon, dihydrobisvertinolone, and dihydrotrichotetronine. The protein is Non-reducing polyketide synthase sor2 of Hypocrea jecorina (strain QM6a) (Trichoderma reesei).